The following is a 418-amino-acid chain: Tyrosine--tRNA ligase (418 aa).

L-tyrosine is bound at residue Tyr34. The short motif at 39–48 (PTADSLHLGH) is the 'HIGH' region element. L-tyrosine-binding residues include Tyr169 and Gln173. Residues 229-233 (KFGKS) carry the 'KMSKS' region motif. Lys232 lines the ATP pocket. One can recognise an S4 RNA-binding domain in the interval 352 to 418 (LNIVEILVSS…GKKKYAVLTY (67 aa)).

This sequence belongs to the class-I aminoacyl-tRNA synthetase family. TyrS type 1 subfamily. As to quaternary structure, homodimer.

The protein resides in the cytoplasm. It catalyses the reaction tRNA(Tyr) + L-tyrosine + ATP = L-tyrosyl-tRNA(Tyr) + AMP + diphosphate + H(+). Catalyzes the attachment of tyrosine to tRNA(Tyr) in a two-step reaction: tyrosine is first activated by ATP to form Tyr-AMP and then transferred to the acceptor end of tRNA(Tyr). The protein is Tyrosine--tRNA ligase of Streptococcus uberis (strain ATCC BAA-854 / 0140J).